The sequence spans 308 residues: Ribosomal RNA small subunit methyltransferase H (308 aa).

S-adenosyl-L-methionine is bound by residues 33-35 (GGY), D51, F82, D96, and Q103.

Belongs to the methyltransferase superfamily. RsmH family.

The protein localises to the cytoplasm. It carries out the reaction cytidine(1402) in 16S rRNA + S-adenosyl-L-methionine = N(4)-methylcytidine(1402) in 16S rRNA + S-adenosyl-L-homocysteine + H(+). In terms of biological role, specifically methylates the N4 position of cytidine in position 1402 (C1402) of 16S rRNA. The sequence is that of Ribosomal RNA small subunit methyltransferase H from Rickettsia canadensis (strain McKiel).